Consider the following 215-residue polypeptide: GTP-binding nuclear protein Ran (215 aa).

Residues 6–170 enclose the Small GTPase Ran-type domain; the sequence is DIPTFKLVLV…LWLARKLLGD (165 aa). GTP contacts are provided by residues 17–24, 35–41, Gly-67, 121–124, and 149–151; these read DGGTGKTT, EKKYVAT, NKVD, and SAK. Positions 36 to 44 are switch-I; it reads KKYVATLGV. The segment at 67 to 83 is switch-II; sequence GQEKFGGLRDGYYIQGQ.

Belongs to the small GTPase superfamily. Ran family. In terms of assembly, found in a nuclear export complex with RanGTP, exportin and pre-miRNA.

The protein resides in the nucleus. In terms of biological role, GTP-binding protein involved in nucleocytoplasmic transport. Required for the import of protein into the nucleus and also for RNA export. Involved in chromatin condensation and control of cell cycle. The chain is GTP-binding nuclear protein Ran from Brugia malayi (Filarial nematode worm).